A 345-amino-acid chain; its full sequence is N-acetyl-gamma-glutamyl-phosphate reductase (345 aa).

Cys149 is an active-site residue.

Belongs to the NAGSA dehydrogenase family. Type 1 subfamily.

It localises to the cytoplasm. It carries out the reaction N-acetyl-L-glutamate 5-semialdehyde + phosphate + NADP(+) = N-acetyl-L-glutamyl 5-phosphate + NADPH + H(+). Its pathway is amino-acid biosynthesis; L-arginine biosynthesis; N(2)-acetyl-L-ornithine from L-glutamate: step 3/4. Functionally, catalyzes the NADPH-dependent reduction of N-acetyl-5-glutamyl phosphate to yield N-acetyl-L-glutamate 5-semialdehyde. This is N-acetyl-gamma-glutamyl-phosphate reductase from Halalkalibacterium halodurans (strain ATCC BAA-125 / DSM 18197 / FERM 7344 / JCM 9153 / C-125) (Bacillus halodurans).